The following is a 310-amino-acid chain: Syndecan-1 (310 aa).

A signal peptide spans 1-22; that stretch reads MRRAALWLWLCALALSLQPALP. At 23-254 the chain is on the extracellular side; that stretch reads QIVATNLPPE…GLLDRKEVLG (232 aa). 2 disordered regions span residues 27–100 and 114–212; these read TNLP…EGPK and LTAR…QDFT. Over residues 32 to 42 the composition is skewed to acidic residues; it reads EDQDGSGDDSD. Residue S37 is glycosylated (O-linked (Xyl...) (chondroitin sulfate) serine). N-linked (GlcNAc...) asparagine glycosylation occurs at N43. O-linked (Xyl...) (heparan sulfate) serine glycosylation is found at S45 and S47. The span at 55–75 shows a compositional bias: polar residues; it reads ITLSQQTPSTWKDTQLLTAIP. The span at 117-127 shows a compositional bias: basic and acidic residues; it reads REQEATPRPRE. Residues 128-151 are compositionally biased toward low complexity; it reads TTQLPTTHLASTTTATTAQEPATS. Over residues 153–164 the composition is skewed to basic and acidic residues; it reads PHRDMQPGHHET. 2 O-linked (Xyl...) (chondroitin sulfate) serine glycosylation sites follow: S206 and S216. A helical transmembrane segment spans residues 255 to 275; it reads GVIAGGLVGLIFAVCLVGFML. Topologically, residues 276–310 are cytoplasmic; that stretch reads YRMKKKDEGSYSLEEPKQANGGAYQKPTKQEEFYA. The interval 284–310 is disordered; sequence GSYSLEEPKQANGGAYQKPTKQEEFYA. S285 is modified (phosphoserine).

The protein belongs to the syndecan proteoglycan family. In terms of assembly, interacts with CDCP1. Interacts (via C-terminus) with TIAM1 (via PDZ domain). Interacts with MDK. Shedding is enhanced by a number of factors such as heparanase, thrombin or EGF. Also by stress and wound healing. PMA-mediated shedding is inhibited by TIMP3. As to expression, detected in placenta (at protein level). Detected in fibroblasts (at protein level).

It is found in the membrane. Its subcellular location is the secreted. The protein localises to the extracellular exosome. Functionally, cell surface proteoglycan that contains both heparan sulfate and chondroitin sulfate and that links the cytoskeleton to the interstitial matrix. Regulates exosome biogenesis in concert with SDCBP and PDCD6IP. Able to induce its own expression in dental mesenchymal cells and also in the neighboring dental epithelial cells via an MSX1-mediated pathway. The chain is Syndecan-1 from Homo sapiens (Human).